An 87-amino-acid polypeptide reads, in one-letter code: Small ribosomal subunit protein bS20 (87 aa).

Residues 1–22 (MAHHKSAIKRIKQNAKKNARNR) are disordered.

It belongs to the bacterial ribosomal protein bS20 family.

Its function is as follows. Binds directly to 16S ribosomal RNA. The chain is Small ribosomal subunit protein bS20 from Pelobacter propionicus (strain DSM 2379 / NBRC 103807 / OttBd1).